A 385-amino-acid polypeptide reads, in one-letter code: Putative cell agglutination protein pfl8 (385 aa).

An N-terminal signal peptide occupies residues 1-20; the sequence is MNSYISLIFTLLFFTSAARS. The interval 41 to 90 is disordered; sequence SSEFTSTITPETPSSSSSTFVPISTHTSSATNTTSGQLSISSSSSTSSEY. N-linked (GlcNAc...) asparagine glycosylation is found at N72, N270, and N346. The 165-residue stretch at 196 to 360 folds into the PA14 domain; sequence EVSTFNKPAY…GPVRTTSYSY (165 aa).

Its subcellular location is the secreted. The protein resides in the cell surface. Functionally, may be involved in agglutination during conjugation or other aspects of colony formation. Induces flocculation when overexpressed. This is Putative cell agglutination protein pfl8 from Schizosaccharomyces pombe (strain 972 / ATCC 24843) (Fission yeast).